The chain runs to 218 residues: Uracil-DNA glycosylase (218 aa).

D59 (proton acceptor) is an active-site residue.

This sequence belongs to the uracil-DNA glycosylase (UDG) superfamily. UNG family.

It is found in the cytoplasm. The enzyme catalyses Hydrolyzes single-stranded DNA or mismatched double-stranded DNA and polynucleotides, releasing free uracil.. Its function is as follows. Excises uracil residues from the DNA which can arise as a result of misincorporation of dUMP residues by DNA polymerase or due to deamination of cytosine. The sequence is that of Uracil-DNA glycosylase from Staphylococcus aureus (strain MSSA476).